The chain runs to 491 residues: Protein nucleotidyltransferase YdiU (491 aa).

The ATP site is built by G94, G96, R97, K117, D129, G130, R180, and R187. The active-site Proton acceptor is the D256. Mg(2+) is bound by residues N257 and D266. Residue D266 coordinates ATP.

It belongs to the SELO family. Mg(2+) serves as cofactor. The cofactor is Mn(2+).

It catalyses the reaction L-seryl-[protein] + ATP = 3-O-(5'-adenylyl)-L-seryl-[protein] + diphosphate. It carries out the reaction L-threonyl-[protein] + ATP = 3-O-(5'-adenylyl)-L-threonyl-[protein] + diphosphate. The catalysed reaction is L-tyrosyl-[protein] + ATP = O-(5'-adenylyl)-L-tyrosyl-[protein] + diphosphate. The enzyme catalyses L-histidyl-[protein] + UTP = N(tele)-(5'-uridylyl)-L-histidyl-[protein] + diphosphate. It catalyses the reaction L-seryl-[protein] + UTP = O-(5'-uridylyl)-L-seryl-[protein] + diphosphate. It carries out the reaction L-tyrosyl-[protein] + UTP = O-(5'-uridylyl)-L-tyrosyl-[protein] + diphosphate. Its function is as follows. Nucleotidyltransferase involved in the post-translational modification of proteins. It can catalyze the addition of adenosine monophosphate (AMP) or uridine monophosphate (UMP) to a protein, resulting in modifications known as AMPylation and UMPylation. This is Protein nucleotidyltransferase YdiU from Clostridium botulinum (strain ATCC 19397 / Type A).